Reading from the N-terminus, the 224-residue chain is MLTQQQLKQQAADAALEFVEQVAGPDVIIGVGTGSTADLFIDGLARFAGRIRGTVASSERSAQRLASHGLLVLDLNDVQYMPIYVDGADEIDANLHMIKGGGGALTREKIVASVAERFICIADESKLVDRLGAFPLPLEVIPMARAAVARSLAALGGEPRLREGFVTDNGNIILDVHGLSINDAPALEARVNNIPGVVTCGLFSLAGADVALLATQNGIRRLSR.

Substrate is bound by residues 33–36 (TGST), 86–89 (DGAD), and 99–102 (KGGG). Glu-108 acts as the Proton acceptor in catalysis. Lys-126 is a binding site for substrate.

This sequence belongs to the ribose 5-phosphate isomerase family. Homodimer.

It carries out the reaction aldehydo-D-ribose 5-phosphate = D-ribulose 5-phosphate. It participates in carbohydrate degradation; pentose phosphate pathway; D-ribose 5-phosphate from D-ribulose 5-phosphate (non-oxidative stage): step 1/1. Functionally, catalyzes the reversible conversion of ribose-5-phosphate to ribulose 5-phosphate. The sequence is that of Ribose-5-phosphate isomerase A from Bordetella avium (strain 197N).